The chain runs to 926 residues: Glycogenin (926 aa).

UDP contacts are provided by L10, T12, Y16, and R85. Residues L10, T12, Y16, R85, K94, D111, A112, D113, N145, S146, D184, D187, and Q188 each coordinate UDP-alpha-D-glucose. Positions 111, 112, and 113 each coordinate UDP. D111 is a binding site for Mn(2+). D113 is a binding site for Mn(2+). Residue Y219 is glycosylated (O-linked (Glc...) tyrosine). The UDP site is built by H236, G239, and K242. H236 provides a ligand contact to Mn(2+). Positions 239 and 242 each coordinate UDP-alpha-D-glucose. Disordered stretches follow at residues 379–432 (PSVS…PEMS), 452–476 (YYAH…LPKE), 547–584 (SIQN…PPRH), 611–749 (MSGK…ETVQ), and 768–903 (LPHA…PNTD). The segment covering 386–402 (LTPPPADAAPAPAPAPV) has biased composition (pro residues). Over residues 404 to 413 (TQTEQKTAQP) the composition is skewed to polar residues. Residues 456–469 (PESHRPATEHKEPE) show a composition bias toward basic and acidic residues. Over residues 557–566 (AHSQHQSHAT) the composition is skewed to low complexity. The segment covering 655–683 (SLHSLQSVPGTPRTQYSTFGKSPRLTNAR) has biased composition (polar residues). Over residues 692-704 (EQPEDSADGDDEN) the composition is skewed to acidic residues. The span at 733-745 (DRWAQTDRVKTVD) shows a compositional bias: basic and acidic residues. A compositionally biased stretch (gly residues) spans 788–798 (SGNGRAGGGGQ). The segment covering 800–812 (EAQTQHQSTYYEY) has biased composition (polar residues). Low complexity-rich tracts occupy residues 813-824 (QQQHPHSQQSRQ) and 851-875 (HAQG…NPNL).

This sequence belongs to the glycosyltransferase 8 family. Glycogenin subfamily. Mn(2+) is required as a cofactor.

It is found in the cytoplasm. It localises to the vacuole. The catalysed reaction is L-tyrosyl-[glycogenin] + UDP-alpha-D-glucose = alpha-D-glucosyl-L-tyrosyl-[glycogenin] + UDP + H(+). The enzyme catalyses [1,4-alpha-D-glucosyl](n)-L-tyrosyl-[glycogenin] + UDP-alpha-D-glucose = [1,4-alpha-D-glucosyl](n+1)-L-tyrosyl-[glycogenin] + UDP + H(+). Functionally, self-glucosylating initiator of glycogen synthesis. It catalyzes the formation of a short alpha (1,4)-glucosyl chain covalently attached via a glucose 1-O-tyrosyl linkage to internal tyrosine residues and these chains act as primers for the elongation reaction catalyzed by glycogen synthase. The sequence is that of Glycogenin from Cryptococcus neoformans var. grubii serotype A (strain H99 / ATCC 208821 / CBS 10515 / FGSC 9487) (Filobasidiella neoformans var. grubii).